A 156-amino-acid polypeptide reads, in one-letter code: Persephin (156 aa).

Positions 1-21 (MAAGRLRILFLLLLSLHLGLG) are cleaved as a signal peptide. 3 disulfides stabilise this stretch: Cys66–Cys124, Cys93–Cys152, and Cys97–Cys154.

This sequence belongs to the TGF-beta family. GDNF subfamily. In terms of assembly, homodimer; disulfide-linked. Interacts with GFRA4 coreceptor and RET: forms a 2:2:2 ternary complex composed of PSPN ligand, GFRA4 and RET receptor. Expressed at low levels in substantia nigra. Cochlea.

It localises to the secreted. Growth factor that exhibits neurotrophic activity on mesencephalic dopaminergic and motor neurons. Acts by binding to its coreceptor, GFRA4, leading to autophosphorylation and activation of the RET receptor. This is Persephin from Rattus norvegicus (Rat).